The primary structure comprises 205 residues: Cell wall / vacuolar inhibitor of fructosidase 1 (205 aa).

The first 23 residues, Met-1–Gly-23, serve as a signal peptide directing secretion. Cystine bridges form between Cys-30–Cys-39 and Cys-93–Cys-134. N-linked (GlcNAc...) asparagine glycans are attached at residues Asn-139 and Asn-156.

The protein belongs to the PMEI family. Mostly expressed in roots, senescent leaves and flowers (in sepals), and, to a lower extent, in stems, specifically in the vascular tissues (e.g. in the phloem).

It localises to the vacuole. Inhibits fructosidases from vacuoles (vacuolar invertase VI). This chain is Cell wall / vacuolar inhibitor of fructosidase 1 (C/VIF1), found in Arabidopsis thaliana (Mouse-ear cress).